The primary structure comprises 422 residues: MANFIDRRLNAKGKSTVNRQRFINRYKQQIKKAVSDAVTRRSVTDVDKGEKISIPTRDISEPMFHQGKGGVRDRVHPGNDQFTRGDKIDRPQGGSGGGAGKGDASDSGEGNDDFVFEISKDEYLELLFEDLELPNLQKNRLNKLVEYQIYRAGFTNDGVPANINIVRSLRSSLARRIAMSASKKKLLKESEQELAELENIPGTKAELILDLKAQIEELKRKIAKVPFIDTFDLRFNNFSRREVPSSQAVMFCLMDVSGSMDQATKDMAKRFYILLYLFLTRTYKNLEVVYIRHHTQAKEVDEHEFFYSQETGGTIVSSALKLMHEIQQARYPADEWNIYAAQASDGDNWADDSPTCKQLLEQKILPLVRYFSYIEITNRAHQTLWREYESLQQHYDNIAVQHIRQAEDIYPVFRELFKKQAV.

The interval 60–111 (SEPMFHQGKGGVRDRVHPGNDQFTRGDKIDRPQGGSGGGAGKGDASDSGEGN) is disordered. Over residues 70–90 (GVRDRVHPGNDQFTRGDKIDR) the composition is skewed to basic and acidic residues.

It belongs to the UPF0229 family.

The chain is UPF0229 protein SO_2883 from Shewanella oneidensis (strain ATCC 700550 / JCM 31522 / CIP 106686 / LMG 19005 / NCIMB 14063 / MR-1).